The sequence spans 614 residues: MPQYRSRTTTQGRNMAGARALWRATGMKDEDFQKPIIAVVNSFTQFVPGHVHLKDMGQLVAREIEKAGGVAKEFNTIAVDDGIAMGHDGMLYSLPSRDIIADSVEYMVNAHCADAMVCISNCDKITPGMLMAAMRLNIPVVFVSGGPMEAGKTKLAEHGLDLVDAMVIAADSSASDEYVAEIERSACPTCGSCSGMFTANSMNCLTEALGLSLPGNGTVVATHSDRRALFERAGHLIVDLCKDYYERENANVLPRSIGNKAAFENAITLDIAMGGSTNTILHLLAIAQEAELDFTMEDIDRISRYVPQLCKVAPNTQKYHIEDVHRAGGIMSILGELARGNLLNVDCPTVHSPTMADAIAQWDITQTGSAEVAEFYKAGPAGIPTQTAFSQSTRWQSLDGDRADGCIRSVEHAYSKEGGLAVLTGNIAEQGCVVKTAGVDESILVFEGTAYVTESQDQAVADILADKVTAGSVVIVRYEGPKGGPGMQEMLYPTSYIKSKGLGKSCALLTDGRFSGGTSGLSIGHVSPEAAAGGAIGLVKTGDKILIDIPNRSINVLLEDGELEKRRAEQDAKGWKPELPRPRKVSSALKAYALLATSADKGAVRDLKKLESLQ.

A Mg(2+)-binding site is contributed by D81. Residue C122 participates in [2Fe-2S] cluster binding. D123 and K124 together coordinate Mg(2+). Residue K124 is modified to N6-carboxylysine. C193 contributes to the [2Fe-2S] cluster binding site. A Mg(2+)-binding site is contributed by E489. S515 acts as the Proton acceptor in catalysis.

Belongs to the IlvD/Edd family. As to quaternary structure, homodimer. It depends on [2Fe-2S] cluster as a cofactor. The cofactor is Mg(2+).

The enzyme catalyses (2R)-2,3-dihydroxy-3-methylbutanoate = 3-methyl-2-oxobutanoate + H2O. It carries out the reaction (2R,3R)-2,3-dihydroxy-3-methylpentanoate = (S)-3-methyl-2-oxopentanoate + H2O. The protein operates within amino-acid biosynthesis; L-isoleucine biosynthesis; L-isoleucine from 2-oxobutanoate: step 3/4. It participates in amino-acid biosynthesis; L-valine biosynthesis; L-valine from pyruvate: step 3/4. In terms of biological role, functions in the biosynthesis of branched-chain amino acids. Catalyzes the dehydration of (2R,3R)-2,3-dihydroxy-3-methylpentanoate (2,3-dihydroxy-3-methylvalerate) into 2-oxo-3-methylpentanoate (2-oxo-3-methylvalerate) and of (2R)-2,3-dihydroxy-3-methylbutanoate (2,3-dihydroxyisovalerate) into 2-oxo-3-methylbutanoate (2-oxoisovalerate), the penultimate precursor to L-isoleucine and L-valine, respectively. The polypeptide is Dihydroxy-acid dehydratase (Saccharophagus degradans (strain 2-40 / ATCC 43961 / DSM 17024)).